Consider the following 229-residue polypeptide: All-trans retinoic acid-induced differentiation factor (229 aa).

An N-terminal signal peptide occupies residues M1–A30. Residues L31–S199 are Extracellular-facing. Residues N44, N79, N157, and N168 are each glycosylated (N-linked (GlcNAc...) asparagine). One can recognise an EGF-like domain in the interval Q152–M193. 3 cysteine pairs are disulfide-bonded: C156-C171, C165-C181, and C183-C192. Residues L200–A220 traverse the membrane as a helical segment. Residues T221–S229 are Cytoplasmic-facing.

Interacts with NELL1; the interaction promotes osteoblastic differentiation and mineralization. Interacts with SLC37A3; the interaction is direct and both proteins are mutually dependent for their stability. In terms of tissue distribution, weakly expressed in hematopoietic cell lines.

Its subcellular location is the nucleus envelope. It localises to the cell membrane. The protein localises to the lysosome membrane. Functionally, promotes osteoblast cell differentiation and terminal mineralization. Plays a role in inducing the cell cycle arrest via inhibiting CCND1 expression in all-trans-retinoic acid (ATRA) signal pathway. In osteoclasts, forms a transporter complex with ATRAID for nitrogen-containing-bisphophonates (N-BPs) required for releasing N-BP molecules that have trafficked to lysosomes through fluid-phase endocytosis into the cytosol. In Homo sapiens (Human), this protein is All-trans retinoic acid-induced differentiation factor.